The sequence spans 198 residues: Cyclin-dependent kinase inhibitor 1B (198 aa).

The span at 1 to 11 (MSNVRVSNGSP) shows a compositional bias: polar residues. The tract at residues 1 to 34 (MSNVRVSNGSPSLERMDARQAEHPKPSACRNLFG) is disordered. Serine 10 carries the phosphoserine; by UHMK1 modification. A compositionally biased stretch (basic and acidic residues) spans 14–25 (ERMDARQAEHPK). The interval 51-91 (DMEEASQRKWNFDFQNHKPLEGKYEWQEVEKGSLPEFYYRP) is interaction with CDK2. Tyrosine 74 is modified (phosphotyrosine; by SRC). The disordered stretch occupies residues 85–198 (PEFYYRPPRP…KKPGLRRRQT (114 aa)). Tyrosine 88 bears the Phosphotyrosine; by ABL, LYN, SRC and JAK2 mark. At tyrosine 89 the chain carries Phosphotyrosine. Residues 126–137 (EDTHLVDPKTDP) show a composition bias toward basic and acidic residues. Residues 153–169 (KRPATDDSSTQNKRANR) carry the Nuclear localization signal motif. Residue threonine 157 is modified to Phosphothreonine; by CaMK1, PKB/AKT1 and PIM1. Position 170 is a phosphothreonine (threonine 170). The span at 175–186 (SDGSPNAGSVEQ) shows a compositional bias: polar residues. Phosphothreonine; by PKB/AKT1, CDK1 and CDK2 is present on threonine 187. Threonine 198 carries the post-translational modification Phosphothreonine; by CaMK1, PKB/AKT1, RPS6KA1, RPS6KA3 and PIM1.

The protein belongs to the CDI family. As to quaternary structure, forms a ternary complex composed of CCNE1, CDK2 and CDKN1B. Interacts directly with CCNE1; the interaction is inhibited by CDK2-dependent phosphorylation on Thr-187. Interacts with COPS5, subunit of the COP9 signalosome complex; the interaction leads to CDKN1B degradation. Interacts with NUP50; the interaction leads to nuclear import and degradation of phosphorylated CDKN1B. Interacts with CCND1 and SNX6. Interacts (Thr-198-phosphorylated form) with 14-3-3 proteins, binds strongly YWHAQ, weakly YWHAE and YWHAH, but not YWHAB nor YWHAZ; the interaction with YWHAQ results in translocation to the cytoplasm. Interacts with AKT1 and LYN; the interactions lead to cytoplasmic mislocation, phosphorylation of CDKN1B and inhibition of cell cycle arrest. Forms a ternary complex with CCNA2 and CDK2; CDKN1B inhibits the kinase activity of CDK2 through conformational rearrangements. Interacts (unphosphorylated form) with CDK2. Forms a complex with CDK2 and SPDYA, but does not directly interact with SPDYA. Forms a ternary complex composed of cyclin D, CDK4 and CDKN1B. Interacts (phosphorylated on Tyr-88 and Tyr-89) with CDK4; the interaction is required for cyclin D and CDK4 complex assembly, induces nuclear translocation and activates the CDK4 kinase activity. Interacts with GRB2. Interacts with PIM1. Identified in a complex with SKP1, SKP2 and CKS1B. Interacts with UHMK1; the interaction leads to cytoplasmic mislocation, phosphorylation of CDKN1B and inhibition of cell cycle arrest. Also interacts with CDK1. Dephosphorylated on Thr-187 by PPM1H, leading to CDKN1B stability. Interacts with HSPA8; the interaction may be associated with susceptibility to ubiquitination. In terms of processing, phosphorylated; phosphorylation occurs on serine, threonine and tyrosine residues. Phosphorylation on Ser-10 is the major site of phosphorylation in resting cells, takes place at the G(0)-G(1) phase and leads to protein stability. Phosphorylation on other sites is greatly enhanced by mitogens, growth factors, cMYC and in certain cancer cell lines. The phosphorylated form found in the cytoplasm is inactivate. Phosphorylation on Thr-198 is required for interaction with 14-3-3 proteins. Phosphorylation on Thr-187, by CDK1 and CDK2 leads to protein ubiquitination and proteasomal degradation. Tyrosine phosphorylation promotes this process. Phosphorylation by PKB/AKT1 can be suppressed by LY294002, an inhibitor of the catalytic subunit of PI3K. Phosphorylation on Tyr-88 and Tyr-89 has no effect on binding CDK2, but is required for binding CDK4. Dephosphorylated on tyrosine residues by G-CSF. Post-translationally, ubiquitinated; in the cytoplasm by the KPC complex (composed of RNF123/KPC1 and UBAC1/KPC2) and, in the nucleus, by SCF(SKP2). The latter requires prior phosphorylation on Thr-187. Ubiquitinated; by a TRIM21-containing SCF(SKP2)-like complex; leads to its degradation. Subject to degradation in the lysosome. Interaction with SNX6 promotes lysosomal degradation. Expressed in kidney (at protein level). Expressed in all tissues tested. Highest levels in skeletal muscle, lowest in liver and kidney.

It is found in the nucleus. The protein localises to the cytoplasm. It localises to the endosome. Important regulator of cell cycle progression. Inhibits the kinase activity of CDK2 bound to cyclin A, but has little inhibitory activity on CDK2 bound to SPDYA. Involved in G1 arrest. Potent inhibitor of cyclin E- and cyclin A-CDK2 complexes. Forms a complex with cyclin type D-CDK4 complexes and is involved in the assembly, stability, and modulation of CCND1-CDK4 complex activation. Acts either as an inhibitor or an activator of cyclin type D-CDK4 complexes depending on its phosphorylation state and/or stoichometry. The sequence is that of Cyclin-dependent kinase inhibitor 1B from Homo sapiens (Human).